Here is a 478-residue protein sequence, read N- to C-terminus: Multidrug resistance outer membrane protein MdtQ (478 aa).

The signal sequence occupies residues Met-1 to Gly-21. Residue Cys-22 is the site of N-palmitoyl cysteine attachment. Residue Cys-22 is the site of S-diacylglycerol cysteine attachment.

Belongs to the outer membrane factor (OMF) (TC 1.B.17) family.

It is found in the cell outer membrane. Could be involved in resistance to puromycin, acriflavine and tetraphenylarsonium chloride. This chain is Multidrug resistance outer membrane protein MdtQ (mdtQ), found in Escherichia coli O157:H7.